The sequence spans 168 residues: Ribosome maturation factor RimM (168 aa).

Positions Asp-94–Leu-167 constitute a PRC barrel domain.

Belongs to the RimM family. In terms of assembly, binds ribosomal protein uS19.

The protein resides in the cytoplasm. Its function is as follows. An accessory protein needed during the final step in the assembly of 30S ribosomal subunit, possibly for assembly of the head region. Essential for efficient processing of 16S rRNA. May be needed both before and after RbfA during the maturation of 16S rRNA. It has affinity for free ribosomal 30S subunits but not for 70S ribosomes. This chain is Ribosome maturation factor RimM, found in Limosilactobacillus reuteri (strain DSM 20016) (Lactobacillus reuteri).